A 258-amino-acid polypeptide reads, in one-letter code: Acyl-[acyl-carrier-protein]--UDP-N-acetylglucosamine O-acyltransferase (258 aa).

It belongs to the transferase hexapeptide repeat family. LpxA subfamily. In terms of assembly, homotrimer.

It localises to the cytoplasm. The catalysed reaction is a (3R)-hydroxyacyl-[ACP] + UDP-N-acetyl-alpha-D-glucosamine = a UDP-3-O-[(3R)-3-hydroxyacyl]-N-acetyl-alpha-D-glucosamine + holo-[ACP]. Its pathway is glycolipid biosynthesis; lipid IV(A) biosynthesis; lipid IV(A) from (3R)-3-hydroxytetradecanoyl-[acyl-carrier-protein] and UDP-N-acetyl-alpha-D-glucosamine: step 1/6. Functionally, involved in the biosynthesis of lipid A, a phosphorylated glycolipid that anchors the lipopolysaccharide to the outer membrane of the cell. This Pseudomonas syringae pv. tomato (strain ATCC BAA-871 / DC3000) protein is Acyl-[acyl-carrier-protein]--UDP-N-acetylglucosamine O-acyltransferase.